We begin with the raw amino-acid sequence, 645 residues long: Minor extracellular protease Epr (645 aa).

An N-terminal signal peptide occupies residues 1–27 (MKNMSCKLVVSVTLFFSFLTIGPLAHA). Residues 28 to 103 (QNSSEKEVIV…AADSTDFKVL (76 aa)) constitute a propeptide that is removed on maturation. One can recognise a Peptidase S8 domain in the interval 115–382 (QWNLEPIQVK…YGLIQYKAQA (268 aa)). Residues Asp142, His172, and Ser326 each act as charge relay system in the active site. 2 disordered regions span residues 490–577 (KQAK…KTAL) and 591–645 (AEAK…KPKK). A compositionally biased stretch (basic and acidic residues) spans 491–508 (QAKDKVAKAEKSKKKTDV). Residues 522-547 (SEKTSLQKRLNKVKSTNLKTAQQSVS) show a composition bias toward polar residues. Positions 592-610 (EAKKVETAKAKVKKAEKDK) are enriched in basic and acidic residues.

This sequence belongs to the peptidase S8 family. Post-translationally, may undergo two steps of processing in its passage through the cell membrane: removal of the N-terminal signal sequence and cleavage of the C-terminal domain. Several active forms of Epr with molecular masses between 40 and 34 kDa were found in the medium of B.subtilis cultures. The size variation of the active forms expressed by the complete epr gene appears to be the result of partial removal of the C-terminus either by processing or degradation.

The protein localises to the secreted. The protein resides in the cell wall. With respect to regulation, requires Ca(2+) for stability. Activity is inhibited by phenylmethylsulfonyl fluoride (PMSF) and EDTA. Serine protease. Involved in the production of the competence and sporulation stimulating factor CSF. In addition, is essential for swarming motility. Plays a key role in DegU-mediated swarming motility. The protease activity is dispensable for swarming. Not essential for growth or sporulation. This chain is Minor extracellular protease Epr, found in Bacillus subtilis (strain 168).